The primary structure comprises 376 residues: Alanine racemase (376 aa).

Catalysis depends on Lys40, which acts as the Proton acceptor; specific for D-alanine. Residue Lys40 is modified to N6-(pyridoxal phosphate)lysine. Residue Arg138 coordinates substrate. Residue Tyr270 is the Proton acceptor; specific for L-alanine of the active site. Met317 contributes to the substrate binding site.

The protein belongs to the alanine racemase family. The cofactor is pyridoxal 5'-phosphate.

It carries out the reaction L-alanine = D-alanine. It functions in the pathway amino-acid biosynthesis; D-alanine biosynthesis; D-alanine from L-alanine: step 1/1. Its function is as follows. Catalyzes the interconversion of L-alanine and D-alanine. May also act on other amino acids. The sequence is that of Alanine racemase (alr) from Lactobacillus delbrueckii subsp. bulgaricus (strain ATCC 11842 / DSM 20081 / BCRC 10696 / JCM 1002 / NBRC 13953 / NCIMB 11778 / NCTC 12712 / WDCM 00102 / Lb 14).